An 871-amino-acid polypeptide reads, in one-letter code: DNA mismatch repair protein MutS (871 aa).

605–612 (GPNMGGKS) contributes to the ATP binding site. Residues 791–840 (PQRPTSASVEQPVDSAKTETAATAEEPQQLSLFPTDEETKPKQPTKKERS) form a disordered region. Positions 827–840 (EETKPKQPTKKERS) are enriched in basic and acidic residues.

It belongs to the DNA mismatch repair MutS family.

Its function is as follows. This protein is involved in the repair of mismatches in DNA. It is possible that it carries out the mismatch recognition step. This protein has a weak ATPase activity. In Shouchella clausii (strain KSM-K16) (Alkalihalobacillus clausii), this protein is DNA mismatch repair protein MutS.